A 758-amino-acid chain; its full sequence is Photosystem I P700 chlorophyll a apoprotein A1 (758 aa).

A run of 8 helical transmembrane segments spans residues 78–101 (VFSA…FHGA), 164–187 (LYCT…FHYH), 203–227 (LNHH…HVSL), 299–317 (IAHH…GHMY), 354–377 (WHAQ…QHMY), 393–419 (LSLF…IFMV), 441–463 (AIIS…LYIH), and 539–557 (FLVH…LILL). Residues Cys581 and Cys590 each coordinate [4Fe-4S] cluster. A run of 2 helical transmembrane segments spans residues 597–618 (HVFL…HFSW) and 672–694 (LSAY…MFLF). His683 is a chlorophyll a' binding site. Positions 691 and 699 each coordinate chlorophyll a. Trp700 serves as a coordination point for phylloquinone. The chain crosses the membrane as a helical span at residues 732-753 (AVGVTHYLLGGIATTWAFFLAR).

It belongs to the PsaA/PsaB family. The PsaA/B heterodimer binds the P700 chlorophyll special pair and subsequent electron acceptors. PSI consists of a core antenna complex that captures photons, and an electron transfer chain that converts photonic excitation into a charge separation. The eukaryotic PSI reaction center is composed of at least 11 subunits. P700 is a chlorophyll a/chlorophyll a' dimer, A0 is one or more chlorophyll a, A1 is one or both phylloquinones and FX is a shared 4Fe-4S iron-sulfur center. serves as cofactor.

The protein localises to the plastid. The protein resides in the chloroplast thylakoid membrane. The enzyme catalyses reduced [plastocyanin] + hnu + oxidized [2Fe-2S]-[ferredoxin] = oxidized [plastocyanin] + reduced [2Fe-2S]-[ferredoxin]. PsaA and PsaB bind P700, the primary electron donor of photosystem I (PSI), as well as the electron acceptors A0, A1 and FX. PSI is a plastocyanin-ferredoxin oxidoreductase, converting photonic excitation into a charge separation, which transfers an electron from the donor P700 chlorophyll pair to the spectroscopically characterized acceptors A0, A1, FX, FA and FB in turn. Oxidized P700 is reduced on the lumenal side of the thylakoid membrane by plastocyanin. The polypeptide is Photosystem I P700 chlorophyll a apoprotein A1 (Pisum sativum (Garden pea)).